The primary structure comprises 463 residues: ATP-dependent protease ATPase subunit HslU (463 aa).

Residues I19, 61–66, D277, E341, and R413 contribute to the ATP site; that span reads GVGKTE.

The protein belongs to the ClpX chaperone family. HslU subfamily. In terms of assembly, a double ring-shaped homohexamer of HslV is capped on each side by a ring-shaped HslU homohexamer. The assembly of the HslU/HslV complex is dependent on binding of ATP.

It is found in the cytoplasm. ATPase subunit of a proteasome-like degradation complex; this subunit has chaperone activity. The binding of ATP and its subsequent hydrolysis by HslU are essential for unfolding of protein substrates subsequently hydrolyzed by HslV. HslU recognizes the N-terminal part of its protein substrates and unfolds these before they are guided to HslV for hydrolysis. This is ATP-dependent protease ATPase subunit HslU from Bacillus anthracis (strain A0248).